A 251-amino-acid chain; its full sequence is HTH-type transcriptional regulator UlaR (251 aa).

Residues 3–58 (EAQRHQILLEMLAQLGFVTVEKVVERLGISPATARRDINKLGESGKLKKVRNGAEA) form the HTH deoR-type domain. The H-T-H motif DNA-binding region spans 20–39 (VTVEKVVERLGISPATARRD).

The protein resides in the cytoplasm. In terms of biological role, represses ulaG and the ulaABCDEF operon. This chain is HTH-type transcriptional regulator UlaR, found in Shigella flexneri.